Reading from the N-terminus, the 598-residue chain is Elongation factor 4 (598 aa).

The region spanning 4-186 (SHIRNFSIIA…VIVNKIPPPE (183 aa)) is the tr-type G domain. GTP-binding positions include 16-21 (DHGKST) and 133-136 (NKID).

Belongs to the TRAFAC class translation factor GTPase superfamily. Classic translation factor GTPase family. LepA subfamily.

The protein resides in the cell inner membrane. It catalyses the reaction GTP + H2O = GDP + phosphate + H(+). Required for accurate and efficient protein synthesis under certain stress conditions. May act as a fidelity factor of the translation reaction, by catalyzing a one-codon backward translocation of tRNAs on improperly translocated ribosomes. Back-translocation proceeds from a post-translocation (POST) complex to a pre-translocation (PRE) complex, thus giving elongation factor G a second chance to translocate the tRNAs correctly. Binds to ribosomes in a GTP-dependent manner. The sequence is that of Elongation factor 4 from Alteromonas mediterranea (strain DSM 17117 / CIP 110805 / LMG 28347 / Deep ecotype).